The primary structure comprises 1563 residues: Integrator complex subunit 5-like protein (1563 aa).

Basic and acidic residues-rich tracts occupy residues 1 to 21 (MKEE…RNDN) and 31 to 44 (EDWR…KNEN). Disordered regions lie at residues 1–63 (MKEE…YDDD), 102–208 (KKSK…NITY), and 270–310 (NSLN…QQNP). Residues 52–63 (GDSDDDDYYDDD) show a composition bias toward acidic residues. 2 stretches are compositionally biased toward low complexity: residues 109–133 (TAAT…TATA) and 141–202 (NNLL…NNNN). A helical transmembrane segment spans residues 350–370 (DSIINWSLSTLTIITRLLIIL). Over residues 381–398 (QQQQQQQQQQQQQQQQQQ) the composition is skewed to low complexity. 4 disordered regions span residues 381 to 417 (QQQQ…RQPI), 466 to 498 (SKSS…SSKT), 637 to 694 (FDNN…DNSS), and 784 to 828 (ILNN…SQEI). A compositionally biased stretch (pro residues) spans 405–414 (FPPPPPPPLR). Low complexity-rich tracts occupy residues 468–496 (SSSS…SSSS), 639–686 (NNNN…NNNN), and 786–824 (NNNN…QQQQ). A helical transmembrane segment spans residues 877-897 (IIIKLISLIGMDSIYSSLIIL). 2 disordered regions span residues 1154–1173 (SGNF…DEYG) and 1268–1303 (KQRM…DQNE). Residues 1160-1172 (GDDDDDEYGDDEY) are compositionally biased toward acidic residues. A compositionally biased stretch (low complexity) spans 1277 to 1288 (SIQQNGNINNEQ). The span at 1289-1303 (QQEEDDNDDADDQNE) shows a compositional bias: acidic residues.

It belongs to the Integrator subunit 5 family. As to quaternary structure, component of the Integrator complex. The core complex associates with protein phosphatase 2A subunits, to form the Integrator-PP2A (INTAC) complex.

Its subcellular location is the nucleus. The protein localises to the cytoplasm. It localises to the nucleus membrane. In terms of biological role, component of the integrator complex, a multiprotein complex that terminates RNA polymerase II (Pol II) transcription in the promoter-proximal region of genes. The integrator complex provides a quality checkpoint during transcription elongation by driving premature transcription termination of transcripts that are unfavorably configured for transcriptional elongation: the complex terminates transcription by (1) catalyzing dephosphorylation of the C-terminal domain (CTD) of Pol II subunit polr2a, (2) degrading the exiting nascent RNA transcript via endonuclease activity and (3) promoting the release of Pol II from bound DNA. The integrator complex is also involved in terminating the synthesis of non-coding Pol II transcripts, such as enhancer RNAs (eRNAs), small nuclear RNAs (snRNAs), telomerase RNAs and long non-coding RNAs (lncRNAs). In Dictyostelium discoideum (Social amoeba), this protein is Integrator complex subunit 5-like protein.